The primary structure comprises 493 residues: 1-aminocyclopropane-1-carboxylate synthase CMW33 (493 aa).

Lys-279 carries the post-translational modification N6-(pyridoxal phosphate)lysine.

This sequence belongs to the class-I pyridoxal-phosphate-dependent aminotransferase family. As to quaternary structure, homodimer. Requires pyridoxal 5'-phosphate as cofactor.

The catalysed reaction is S-adenosyl-L-methionine = 1-aminocyclopropane-1-carboxylate + S-methyl-5'-thioadenosine + H(+). Its pathway is alkene biosynthesis; ethylene biosynthesis via S-adenosyl-L-methionine; ethylene from S-adenosyl-L-methionine: step 1/2. Its function is as follows. Catalyzes the formation of 1-aminocyclopropane-1-carboxylate, a direct precursor of ethylene in higher plants. In Cucurbita maxima (Pumpkin), this protein is 1-aminocyclopropane-1-carboxylate synthase CMW33 (ACS1).